Reading from the N-terminus, the 452-residue chain is Bifunctional protein GlmU (452 aa).

The interval 1-218 is pyrophosphorylase; that stretch reads MKVLILAAGL…IVEVSGVNDR (218 aa). UDP-N-acetyl-alpha-D-glucosamine is bound by residues 6 to 9, Lys20, Gln68, 73 to 74, 95 to 97, Gly134, Glu147, Asn162, and Asn216; these read LAAG, GT, and YGD. Position 97 (Asp97) interacts with Mg(2+). Asn216 provides a ligand contact to Mg(2+). A linker region spans residues 219-239; sequence IQLAQLETIAKQRILEKLMLS. The N-acetyltransferase stretch occupies residues 240 to 452; that stretch reads GVTIVDPNST…EELKNADHKE (213 aa). Arg321 and Lys339 together coordinate UDP-N-acetyl-alpha-D-glucosamine. His351 (proton acceptor) is an active-site residue. UDP-N-acetyl-alpha-D-glucosamine is bound by residues Tyr354 and Asn365. Residues Ala368, 374 to 375, Ser393, Ala411, and Arg428 each bind acetyl-CoA; that span reads NY.

The protein in the N-terminal section; belongs to the N-acetylglucosamine-1-phosphate uridyltransferase family. In the C-terminal section; belongs to the transferase hexapeptide repeat family. In terms of assembly, homotrimer. Mg(2+) serves as cofactor.

It localises to the cytoplasm. The enzyme catalyses alpha-D-glucosamine 1-phosphate + acetyl-CoA = N-acetyl-alpha-D-glucosamine 1-phosphate + CoA + H(+). It catalyses the reaction N-acetyl-alpha-D-glucosamine 1-phosphate + UTP + H(+) = UDP-N-acetyl-alpha-D-glucosamine + diphosphate. Its pathway is nucleotide-sugar biosynthesis; UDP-N-acetyl-alpha-D-glucosamine biosynthesis; N-acetyl-alpha-D-glucosamine 1-phosphate from alpha-D-glucosamine 6-phosphate (route II): step 2/2. It functions in the pathway nucleotide-sugar biosynthesis; UDP-N-acetyl-alpha-D-glucosamine biosynthesis; UDP-N-acetyl-alpha-D-glucosamine from N-acetyl-alpha-D-glucosamine 1-phosphate: step 1/1. It participates in bacterial outer membrane biogenesis; LPS lipid A biosynthesis. Catalyzes the last two sequential reactions in the de novo biosynthetic pathway for UDP-N-acetylglucosamine (UDP-GlcNAc). The C-terminal domain catalyzes the transfer of acetyl group from acetyl coenzyme A to glucosamine-1-phosphate (GlcN-1-P) to produce N-acetylglucosamine-1-phosphate (GlcNAc-1-P), which is converted into UDP-GlcNAc by the transfer of uridine 5-monophosphate (from uridine 5-triphosphate), a reaction catalyzed by the N-terminal domain. The chain is Bifunctional protein GlmU from Fervidobacterium nodosum (strain ATCC 35602 / DSM 5306 / Rt17-B1).